Here is a 197-residue protein sequence, read N- to C-terminus: ATP-dependent Clp protease proteolytic subunit (197 aa).

Ser-102 (nucleophile) is an active-site residue. The active site involves His-127.

This sequence belongs to the peptidase S14 family. As to quaternary structure, fourteen ClpP subunits assemble into 2 heptameric rings which stack back to back to give a disk-like structure with a central cavity, resembling the structure of eukaryotic proteasomes.

The protein localises to the cytoplasm. The catalysed reaction is Hydrolysis of proteins to small peptides in the presence of ATP and magnesium. alpha-casein is the usual test substrate. In the absence of ATP, only oligopeptides shorter than five residues are hydrolyzed (such as succinyl-Leu-Tyr-|-NHMec, and Leu-Tyr-Leu-|-Tyr-Trp, in which cleavage of the -Tyr-|-Leu- and -Tyr-|-Trp bonds also occurs).. In terms of biological role, cleaves peptides in various proteins in a process that requires ATP hydrolysis. Has a chymotrypsin-like activity. Plays a major role in the degradation of misfolded proteins. The chain is ATP-dependent Clp protease proteolytic subunit from Buchnera aphidicola subsp. Schizaphis graminum (strain Sg).